A 282-amino-acid polypeptide reads, in one-letter code: Small ribosomal subunit protein uS2 (282 aa).

Positions 260–282 (KRRRSKVYKEEEREVVTNEDESR) are disordered. The segment covering 266–282 (VYKEEEREVVTNEDESR) has biased composition (basic and acidic residues).

Belongs to the universal ribosomal protein uS2 family.

In Wolbachia pipientis wMel, this protein is Small ribosomal subunit protein uS2.